The following is a 296-amino-acid chain: Elongation factor Ts (296 aa).

Residues 79–82 form an involved in Mg(2+) ion dislocation from EF-Tu region; the sequence is TDFV.

The protein belongs to the EF-Ts family.

It localises to the cytoplasm. Its function is as follows. Associates with the EF-Tu.GDP complex and induces the exchange of GDP to GTP. It remains bound to the aminoacyl-tRNA.EF-Tu.GTP complex up to the GTP hydrolysis stage on the ribosome. This Paracoccus denitrificans (strain Pd 1222) protein is Elongation factor Ts.